The sequence spans 954 residues: Bifunctional endo-1,4-beta-xylanase XylA (954 aa).

The segment at residues 1-27 is a signal peptide (or 28, or 29); it reads MKLSKIKKVLSGTVSALMIASAAPVVA. Residues 29–236 form the GH11 domain; that stretch reads AADQQTRGNV…SNGSANVKSV (208 aa). The active-site Nucleophile is the E122. Residue E223 is the Proton donor of the active site. The span at 233–243 shows a compositional bias: polar residues; the sequence is VKSVSVTQGGS. The interval 233-628 is disordered; that stretch reads VKSVSVTQGG…NNNNSAGSSD (396 aa). The span at 246–622 shows a compositional bias: low complexity; the sequence is NGGQQQNNDW…WNQGQQNNNN (377 aa). The 329-residue stretch at 624-952 folds into the GH10 domain; that stretch reads AGSSDSLKGA…KPAYDRVMAL (329 aa). The active-site Proton donor is the E774. E884 (nucleophile) is an active-site residue.

In the N-terminal section; belongs to the glycosyl hydrolase 11 (cellulase G) family. It in the C-terminal section; belongs to the glycosyl hydrolase 10 (cellulase F) family.

It carries out the reaction Endohydrolysis of (1-&gt;4)-beta-D-xylosidic linkages in xylans.. Its pathway is glycan degradation; xylan degradation. In terms of biological role, xylanase domain releases more xylo-oligosaccharides and GH10 domain more xylose. This Ruminococcus flavefaciens protein is Bifunctional endo-1,4-beta-xylanase XylA (xynA).